We begin with the raw amino-acid sequence, 370 residues long: MLLGYCGSGYYGMQYNPPHKTIEGEILTKLFDVGAISEENSLAPKKNSFMAAARTDKGVHAMLNLLSLKITLREDTVAKLNAALPPEIRVWGIQPVNKKFNARSACDSRWYQYLIPEFILIGPPRSSLLHRNVGGCYREDGSQEVWDTFLEQTRGRFSGDELCRLQDTAQKLSESDPLVQDYVGLLSGTLSGYCLSPSKLDAFEAAMQEYVGTHNFHNFTTGKLWGDPSAQRHIKKVVVSQASPGWICVRIHGQSFMLHQIRRMVALAVLAARCQLPPNIVRNYFNAGPRKYIPRAPAQGLLLEGPVFDGYNTKLRNLLYCEIRPDDITLERMCRFRERQICTAIAHEETQRHVFCHFVRQMNRLATPLI.

Aspartate 56 (nucleophile) is an active-site residue. Tyrosine 111 is a binding site for substrate.

It belongs to the tRNA pseudouridine synthase TruA family.

The protein resides in the mitochondrion. The catalysed reaction is uridine(27/28) in mitochondrial tRNA = pseudouridine(27/28) in mitochondrial tRNA. In terms of biological role, mitochondrial-specific pseudouridine synthase catalyzing the formation of pseudouridine at positions 27 and 28 in the anticodon stem and loop of mitochondrial transfer RNAs. In Saccharomyces cerevisiae (strain ATCC 204508 / S288c) (Baker's yeast), this protein is tRNA pseudouridine(27/28) synthase (PUS2).